The sequence spans 252 residues: tRNA pseudouridine synthase A (252 aa).

D52 (nucleophile) is an active-site residue. Y110 contributes to the substrate binding site.

This sequence belongs to the tRNA pseudouridine synthase TruA family. Homodimer.

It carries out the reaction uridine(38/39/40) in tRNA = pseudouridine(38/39/40) in tRNA. Formation of pseudouridine at positions 38, 39 and 40 in the anticodon stem and loop of transfer RNAs. This is tRNA pseudouridine synthase A from Syntrophotalea carbinolica (strain DSM 2380 / NBRC 103641 / GraBd1) (Pelobacter carbinolicus).